The chain runs to 546 residues: DNA ligase (546 aa).

An ATP-binding site is contributed by Glu-244. The active-site N6-AMP-lysine intermediate is Lys-246. 6 residues coordinate ATP: Arg-251, Arg-266, Glu-295, Phe-334, Arg-405, and Lys-411.

This sequence belongs to the ATP-dependent DNA ligase family. It depends on Mg(2+) as a cofactor.

It catalyses the reaction ATP + (deoxyribonucleotide)n-3'-hydroxyl + 5'-phospho-(deoxyribonucleotide)m = (deoxyribonucleotide)n+m + AMP + diphosphate.. Its function is as follows. DNA ligase that seals nicks in double-stranded DNA during DNA replication, DNA recombination and DNA repair. In Methanocorpusculum labreanum (strain ATCC 43576 / DSM 4855 / Z), this protein is DNA ligase.